Consider the following 1305-residue polypeptide: Contactin-associated protein like 5-4 (1305 aa).

The first 24 residues, 1–24, serve as a signal peptide directing secretion; that stretch reads MNSVRRLNSILTLVLSGLWHLGLT. The Extracellular segment spans residues 25–1237; the sequence is ATNYNCDEPL…LTDTVQSDSA (1213 aa). An F5/8 type C domain is found at 30–174; that stretch reads CDEPLASFLS…IGMRVEVYGC (145 aa). Cys-30 and Cys-174 are joined by a disulfide. Laminin G-like domains are found at residues 180 to 360 and 367 to 544; these read IVGF…TFSC and PITF…IDLC. An N-linked (GlcNAc...) asparagine glycan is attached at Asn-282. Cys-329 and Cys-360 are joined by a disulfide. Residue Asn-496 is glycosylated (N-linked (GlcNAc...) asparagine). Disulfide bonds link Cys-512–Cys-544, Cys-550–Cys-561, and Cys-555–Cys-570. Residues 546–583 form the EGF-like 1 domain; it reads IKDRCLPNYCEHGGHCAQNWTTFYCNCSDTGYTGATCH. Asn-571 is a glycosylation site (N-linked (GlcNAc...) asparagine). The cysteines at positions 572 and 582 are disulfide-linked. A Fibrinogen C-terminal domain is found at 584–790; that stretch reads DSVYEQSCEV…LRCYGDRHFW (207 aa). An N-linked (GlcNAc...) asparagine glycan is attached at Asn-622. Residues 791–956 form the Laminin G-like 3 domain; it reads NAVSFTTEAS…KLMSGVTPGC (166 aa). 4 disulfide bridges follow: Cys-929–Cys-956, Cys-960–Cys-973, Cys-967–Cys-982, and Cys-984–Cys-994. Residues 957 to 995 enclose the EGF-like 2 domain; the sequence is LGHCSSYGSNCLNGGKCVEKQSGYSCDCTNSPNEGPFCQ. The Laminin G-like 4 domain maps to 1014–1198; sequence EPYLVIKNTS…VQGTLTESGC (185 aa). The N-linked (GlcNAc...) asparagine glycan is linked to Asn-1057. A disulfide bridge connects residues Cys-1163 and Cys-1198. Residues 1238 to 1258 form a helical membrane-spanning segment; the sequence is VIGGIIALVTFVTFCVIGIMI. The Cytoplasmic segment spans residues 1259–1305; the sequence is HFLYLHKQSHCTNQTKEKEYSENLSNSFRNAIDLQNTASECKREYFI.

Belongs to the neurexin family.

It is found in the membrane. Functionally, may play a role in the correct development and proper functioning of the peripheral and central nervous system and be involved in cell adhesion and intercellular communication. The protein is Contactin-associated protein like 5-4 (Cntnap5d) of Rattus norvegicus (Rat).